Reading from the N-terminus, the 307-residue chain is UPF0276 protein HI_1600 (307 aa).

Belongs to the UPF0276 family.

In Haemophilus influenzae (strain ATCC 51907 / DSM 11121 / KW20 / Rd), this protein is UPF0276 protein HI_1600.